Consider the following 345-residue polypeptide: Eukaryotic translation initiation factor 3 subunit F (345 aa).

Residues 30 to 166 form the MPN domain; sequence VVIQPQAIFS…TRAYISAPVG (137 aa). The segment at 308–345 is disordered; it reads GGESGGAESGAQRGQRGGKGGRGGQQRNQERGAEEARA. The span at 322–331 shows a compositional bias: gly residues; sequence QRGGKGGRGG. The segment covering 335–345 has biased composition (basic and acidic residues); sequence NQERGAEEARA.

The protein belongs to the eIF-3 subunit F family. In terms of assembly, component of the eukaryotic translation initiation factor 3 (eIF-3) complex.

It is found in the cytoplasm. Component of the eukaryotic translation initiation factor 3 (eIF-3) complex, which is involved in protein synthesis of a specialized repertoire of mRNAs and, together with other initiation factors, stimulates binding of mRNA and methionyl-tRNAi to the 40S ribosome. The eIF-3 complex specifically targets and initiates translation of a subset of mRNAs involved in cell proliferation. The chain is Eukaryotic translation initiation factor 3 subunit F from Aspergillus clavatus (strain ATCC 1007 / CBS 513.65 / DSM 816 / NCTC 3887 / NRRL 1 / QM 1276 / 107).